The following is a 589-amino-acid chain: MCGIIGIVSLRESKKLAEMTVSALKRLEYRGYDSVGVASISSNGLEIRKAKGKVEEVVLQKKIEEMEGYVFLGHTRWATHGPPTDYNAHPHTDCNGNIAVVHNGTIKNYKELREELESLGHKFKSETDTEVIPHLIEEFMKRGMDPFQAFKSAIKSLEGSYAVLAVINGERRIFFAKKDNPLIIGLGEGQNFIASDIPAFLPYTKRILVIRDDELGFITPETVYLEDKDGNVINIKERIRSVDWDIETASKEGYPHFMIKEIHESPRAVKETIDSLMSDIDLVEKVIEEIKNAERVIVIGAGTSYHAGLYFSIELNRLGINSLPVIASEYYNVRSKKGDLVFAISQSGETIDVLQGIRMMRNSGAKIISLTNVIESAIARESDYKIYMRAGPEIGVAATKTFTTQLASILFILSVLKKENLKKMEKAPDIVRDTISQVEGLTKKIGEELAKKSNIYYLGRGLSLPLAMEGALKIKEIAYVHAEAYPAGESKHGPISLVEKGFPVVIINDGELTELLQNNLMEMKARGARIYAVSVNKKMKDADVEIELQSEIPVLSIAPVIQLIAYYAAVTKGYDPDKPRNLAKTVTVE.

The Nucleophile; for GATase activity role is filled by Cys2. Residues 2–221 enclose the Glutamine amidotransferase type-2 domain; that stretch reads CGIIGIVSLR…DDELGFITPE (220 aa). SIS domains are found at residues 286 to 426 and 445 to 579; these read VIEE…KMEK and IGEE…PDKP. The For Fru-6P isomerization activity role is filled by Lys584.

In terms of assembly, homodimer.

It is found in the cytoplasm. It carries out the reaction D-fructose 6-phosphate + L-glutamine = D-glucosamine 6-phosphate + L-glutamate. Functionally, catalyzes the first step in hexosamine metabolism, converting fructose-6P into glucosamine-6P using glutamine as a nitrogen source. This is Glutamine--fructose-6-phosphate aminotransferase [isomerizing] from Sulfurisphaera tokodaii (strain DSM 16993 / JCM 10545 / NBRC 100140 / 7) (Sulfolobus tokodaii).